A 324-amino-acid polypeptide reads, in one-letter code: Beta-ketoacyl-[acyl-carrier-protein] synthase III (324 aa).

Active-site residues include Cys-113 and His-251. An ACP-binding region spans residues 252 to 256; it reads QANKR. Asn-281 is a catalytic residue.

The protein belongs to the thiolase-like superfamily. FabH family. Homodimer.

It localises to the cytoplasm. It carries out the reaction malonyl-[ACP] + acetyl-CoA + H(+) = 3-oxobutanoyl-[ACP] + CO2 + CoA. Its pathway is lipid metabolism; fatty acid biosynthesis. Its function is as follows. Catalyzes the condensation reaction of fatty acid synthesis by the addition to an acyl acceptor of two carbons from malonyl-ACP. Catalyzes the first condensation reaction which initiates fatty acid synthesis and may therefore play a role in governing the total rate of fatty acid production. Possesses both acetoacetyl-ACP synthase and acetyl transacylase activities. Its substrate specificity determines the biosynthesis of branched-chain and/or straight-chain of fatty acids. This chain is Beta-ketoacyl-[acyl-carrier-protein] synthase III, found in Bartonella henselae (strain ATCC 49882 / DSM 28221 / CCUG 30454 / Houston 1) (Rochalimaea henselae).